We begin with the raw amino-acid sequence, 469 residues long: Zinc transporter SLC39A7 (469 aa).

A helical membrane pass occupies residues 5 to 25 (LGAPHWVAVGLLTWAALGLLV). 2 stretches are compositionally biased toward basic and acidic residues: residues 43–56 (HGHS…DFHH) and 66–114 (HTHE…EHSH). The segment at 43 to 122 (HGHSHRRSHE…SHGGYGESGA (80 aa)) is disordered. Histidine 66 bears the Pros-methylhistidine mark. The next 3 helical transmembrane spans lie at 138–158 (ALGA…LIPV), 169–189 (LQIL…LHLI), and 214–234 (GPIL…LVVE). The span at 242-255 (GGHGHSHGHGHTHG) shows a compositional bias: basic residues. The interval 242–313 (GGHGHSHGHG…QNSEEEKTGS (72 aa)) is disordered. Residues 256 to 266 (HTQGSHGHGTQ) are compositionally biased toward low complexity. Phosphoserine occurs at positions 275 and 276. Positions 295–313 (RLKDGPLRPQNSEEEKTGS) are enriched in basic and acidic residues. 3 consecutive transmembrane segments (helical) span residues 386–406 (LTAI…GGAV), 417–437 (GWVL…SVLP), and 448–468 (SLLE…IAHL).

The protein belongs to the ZIP transporter (TC 2.A.5) family. KE4/Catsup subfamily. Homodimer. Post-translationally, methylation at some His residue by METTL9 leads to reduced zinc-binding. In terms of processing, rapidly phosphorylated by CK2 following Zn(2+) treatment. This phosphorylation is required for efficient cytosolic Zn(2+) release.

Its subcellular location is the endoplasmic reticulum membrane. It localises to the golgi apparatus. The protein localises to the cis-Golgi network membrane. The enzyme catalyses Zn(2+)(in) = Zn(2+)(out). Functionally, transports Zn(2+) from the endoplasmic reticulum (ER)/Golgi apparatus to the cytosol, playing an essential role in the regulation of cytosolic zinc levels. Acts as a gatekeeper of zinc release from intracellular stores, requiring post-translational activation by phosphorylation, resulting in activation of multiple downstream pathways leading to cell growth and proliferation. Has an essential role in B cell development and is required for proper B cell receptor signaling. Plays an important role in maintaining intestinal epithelial homeostasis and skin dermis development by regulating ER function. Controls cell signaling pathways involved in glucose metabolism in skeletal muscle. Has a protective role against ER stress in different biological contexts. Mediates Zn(2+)-induced ferroptosis. This chain is Zinc transporter SLC39A7, found in Canis lupus familiaris (Dog).